A 365-amino-acid polypeptide reads, in one-letter code: MVPFMRILGIETSCDETAAAVVERNAEGHCNVLSDVVLSQLDEHSAYGGVVPEIAARAHVEALDELIEQALKRANVSLADVDAIAATSGPGLIGGLLVGLMTGKAIARAAGKPLYAINHLEGHALTARLTHGLSFPYLVLLVSGGHTQLILVRGVGQYERWGTTIDDALGEAFDKTAKLLGLPYPGGPAVERMARDGNADRFDFPRPLVGEARLDFSFSGLKTAVRQAAQDIAPLSDQDVADICASFQRAISRTLKDRIGRGLQRFKREFPATGEKPALVVAGGVAANLELRATLQALCDKNGFRFIAPPLSLCTDNAVMIAWAGLERMATGVAPDTLDVQPRSRWPLDANAETLIGFGKRGAKA.

Fe cation-binding residues include H119 and H123. Residues 141–145 (LVSGG), D174, G187, and N288 each bind substrate. D316 is a binding site for Fe cation.

This sequence belongs to the KAE1 / TsaD family. Requires Fe(2+) as cofactor.

The protein localises to the cytoplasm. The enzyme catalyses L-threonylcarbamoyladenylate + adenosine(37) in tRNA = N(6)-L-threonylcarbamoyladenosine(37) in tRNA + AMP + H(+). Functionally, required for the formation of a threonylcarbamoyl group on adenosine at position 37 (t(6)A37) in tRNAs that read codons beginning with adenine. Is involved in the transfer of the threonylcarbamoyl moiety of threonylcarbamoyl-AMP (TC-AMP) to the N6 group of A37, together with TsaE and TsaB. TsaD likely plays a direct catalytic role in this reaction. The protein is tRNA N6-adenosine threonylcarbamoyltransferase of Rhizobium etli (strain ATCC 51251 / DSM 11541 / JCM 21823 / NBRC 15573 / CFN 42).